Reading from the N-terminus, the 251-residue chain is Small ribosomal subunit protein uS2 (251 aa).

An N-acetylserine modification is found at Ser-2. The disordered stretch occupies residues 213-251; the sequence is QVAEEATAAADEDVKEEVAEEQTEAADWAEGNTEEVASW. Positions 222-236 are enriched in acidic residues; the sequence is ADEDVKEEVAEEQTE.

Belongs to the universal ribosomal protein uS2 family. Component of the small ribosomal subunit. Mature ribosomes consist of a small (40S) and a large (60S) subunit. The 40S subunit contains about 33 different proteins and 1 molecule of RNA (18S). The 60S subunit contains about 49 different proteins and 3 molecules of RNA (25S, 5.8S and 5S). Interacts with RPS21.

It localises to the cytoplasm. In terms of biological role, required for the assembly and/or stability of the 40S ribosomal subunit. Required for the processing of the 20S rRNA-precursor to mature 18S rRNA in a late step of the maturation of 40S ribosomal subunits. The sequence is that of Small ribosomal subunit protein uS2 from Lachancea thermotolerans (strain ATCC 56472 / CBS 6340 / NRRL Y-8284) (Yeast).